Reading from the N-terminus, the 57-residue chain is Large ribosomal subunit protein bL32 (57 aa).

Belongs to the bacterial ribosomal protein bL32 family.

The sequence is that of Large ribosomal subunit protein bL32 from Ureaplasma parvum serovar 3 (strain ATCC 27815 / 27 / NCTC 11736).